We begin with the raw amino-acid sequence, 337 residues long: Glyceraldehyde-3-phosphate dehydrogenase 1, cytosolic (337 aa).

Residues 1–151 (MGKIKIGING…YTSDVNIVSN (151 aa)) form a binding to NAD region. NAD(+)-binding positions include 13–14 (RI), D35, and R82. The catalytic stretch occupies residues 152-337 (ASCTTNCLAP…DLIRHMFKTQ (186 aa)). Residues 153-155 (SCT), T184, 213-214 (TG), and R236 each bind D-glyceraldehyde 3-phosphate. C154 acts as the Nucleophile in catalysis. N318 contributes to the NAD(+) binding site.

This sequence belongs to the glyceraldehyde-3-phosphate dehydrogenase family. As to quaternary structure, homotetramer.

Its subcellular location is the cytoplasm. The enzyme catalyses D-glyceraldehyde 3-phosphate + phosphate + NAD(+) = (2R)-3-phospho-glyceroyl phosphate + NADH + H(+). It functions in the pathway carbohydrate degradation; glycolysis; pyruvate from D-glyceraldehyde 3-phosphate: step 1/5. Key enzyme in glycolysis that catalyzes the first step of the pathway by converting D-glyceraldehyde 3-phosphate (G3P) into 3-phospho-D-glyceroyl phosphate. Essential for the maintenance of cellular ATP levels and carbohydrate metabolism. The sequence is that of Glyceraldehyde-3-phosphate dehydrogenase 1, cytosolic (GAPC1) from Zea mays (Maize).